The following is a 37-amino-acid chain: Large ribosomal subunit protein bL36c (37 aa).

Belongs to the bacterial ribosomal protein bL36 family.

It is found in the plastid. The protein localises to the chloroplast. This Cucumis sativus (Cucumber) protein is Large ribosomal subunit protein bL36c.